We begin with the raw amino-acid sequence, 512 residues long: Bifunctional purine biosynthesis protein PurH (512 aa).

The MGS-like domain maps to 1 to 150; that stretch reads MIGEERVVRA…KNFPAVLVLV (150 aa).

The protein belongs to the PurH family.

The catalysed reaction is (6R)-10-formyltetrahydrofolate + 5-amino-1-(5-phospho-beta-D-ribosyl)imidazole-4-carboxamide = 5-formamido-1-(5-phospho-D-ribosyl)imidazole-4-carboxamide + (6S)-5,6,7,8-tetrahydrofolate. It carries out the reaction IMP + H2O = 5-formamido-1-(5-phospho-D-ribosyl)imidazole-4-carboxamide. It participates in purine metabolism; IMP biosynthesis via de novo pathway; 5-formamido-1-(5-phospho-D-ribosyl)imidazole-4-carboxamide from 5-amino-1-(5-phospho-D-ribosyl)imidazole-4-carboxamide (10-formyl THF route): step 1/1. It functions in the pathway purine metabolism; IMP biosynthesis via de novo pathway; IMP from 5-formamido-1-(5-phospho-D-ribosyl)imidazole-4-carboxamide: step 1/1. The protein is Bifunctional purine biosynthesis protein PurH of Chloroflexus aurantiacus (strain ATCC 29366 / DSM 635 / J-10-fl).